A 407-amino-acid polypeptide reads, in one-letter code: MKYDHLLVRYGELTLKGSNRKKFVNQLRNNVNKSLKGLDGFVVKGKRDRMYIELEDHADINEITNRLSKIFGIKSISPVLKVEKSIEAMSAETIKFAQQFEENSTFKIDVKRADKNFPMDTYELQRELGGTVLKQIENVSVNVKRPDHEIRVEVRLDAIYMYEEVVPGSGGLPVGTGGKTLLMLSGGIDSPVAGMEVMRRGVTIEAIHFHSPPFTSDQAKEKVIELTRILAERVGPIKLHIVPFTELQKQVNKVVHPRYTMTSTRRMMMRVADKLVHQIGAYAIVNGENLGQVASQTLHSMYAINNVTSTPVLRPLLTYDKEEIIIKSKEIGTFETSIQPFEDCCTIFTPKNPVTEPNFDKVVQYESVFDFEEMINRAVENIETLEITSDYKTIKEQQTNQLINDFL.

The THUMP domain occupies 61–165 (NEITNRLSKI…LDAIYMYEEV (105 aa)). Residues 183 to 184 (ML), 208 to 209 (HF), Arg265, Gly287, and Gln296 each bind ATP.

It belongs to the ThiI family.

It is found in the cytoplasm. It carries out the reaction [ThiI sulfur-carrier protein]-S-sulfanyl-L-cysteine + a uridine in tRNA + 2 reduced [2Fe-2S]-[ferredoxin] + ATP + H(+) = [ThiI sulfur-carrier protein]-L-cysteine + a 4-thiouridine in tRNA + 2 oxidized [2Fe-2S]-[ferredoxin] + AMP + diphosphate. It catalyses the reaction [ThiS sulfur-carrier protein]-C-terminal Gly-Gly-AMP + S-sulfanyl-L-cysteinyl-[cysteine desulfurase] + AH2 = [ThiS sulfur-carrier protein]-C-terminal-Gly-aminoethanethioate + L-cysteinyl-[cysteine desulfurase] + A + AMP + 2 H(+). The protein operates within cofactor biosynthesis; thiamine diphosphate biosynthesis. Its function is as follows. Catalyzes the ATP-dependent transfer of a sulfur to tRNA to produce 4-thiouridine in position 8 of tRNAs, which functions as a near-UV photosensor. Also catalyzes the transfer of sulfur to the sulfur carrier protein ThiS, forming ThiS-thiocarboxylate. This is a step in the synthesis of thiazole, in the thiamine biosynthesis pathway. The sulfur is donated as persulfide by IscS. This is Probable tRNA sulfurtransferase from Staphylococcus aureus (strain MRSA252).